Here is a 1358-residue protein sequence, read N- to C-terminus: DNA-directed RNA polymerase subunit beta (1358 aa).

The protein belongs to the RNA polymerase beta chain family. The RNAP catalytic core consists of 2 alpha, 1 beta, 1 beta' and 1 omega subunit. When a sigma factor is associated with the core the holoenzyme is formed, which can initiate transcription.

The enzyme catalyses RNA(n) + a ribonucleoside 5'-triphosphate = RNA(n+1) + diphosphate. Its function is as follows. DNA-dependent RNA polymerase catalyzes the transcription of DNA into RNA using the four ribonucleoside triphosphates as substrates. This Xanthobacter autotrophicus (strain ATCC BAA-1158 / Py2) protein is DNA-directed RNA polymerase subunit beta.